The following is a 1055-amino-acid chain: Vacuolar protein sorting-associated protein 54 (1055 aa).

A coiled-coil region spans residues 363–383; that stretch reads TKKIIEVHQKYEQKKHLLAKL. The segment at 774–794 is disordered; it reads IDDGPTKKPFKRTGSSATIDS.

Belongs to the VPS54 family. Component of the Golgi-associated retrograde protein (GARP) complex, also called VFT (VPS fifty-three) complex, composed of VPS51, VPS52, VPS53 and VPS54.

Its subcellular location is the golgi apparatus. It is found in the trans-Golgi network. In terms of biological role, acts as a component of the GARP complex that is involved in retrograde transport from early and late endosomes to the trans-Golgi network (TGN). The GARP complex facilitates tethering as well as SNARE complex assembly at the Golgi. The polypeptide is Vacuolar protein sorting-associated protein 54 (vps-54) (Caenorhabditis briggsae).